The sequence spans 252 residues: tRNA pseudouridine synthase A (252 aa).

D52 functions as the Nucleophile in the catalytic mechanism. A substrate-binding site is contributed by Y110.

It belongs to the tRNA pseudouridine synthase TruA family. In terms of assembly, homodimer.

The catalysed reaction is uridine(38/39/40) in tRNA = pseudouridine(38/39/40) in tRNA. Its function is as follows. Formation of pseudouridine at positions 38, 39 and 40 in the anticodon stem and loop of transfer RNAs. The polypeptide is tRNA pseudouridine synthase A (Blochmanniella floridana).